The chain runs to 506 residues: Tyrosine-protein kinase isoform SRK4 (506 aa).

Composition is skewed to polar residues over residues 1–10 (MGSCCSSQDG) and 18–31 (AGST…SQSV). The segment at 1–53 (MGSCCSSQDGDGNGKATAGSTVDSHELSQSVKGKIKQPEPKPKPPPQVPPAQD) is disordered. An SH3 domain is found at 54–116 (VKYPIYVGKY…PSNYVAEYKS (63 aa)). In terms of domain architecture, SH2 spans 122-214 (WFFGQVKRVD…GLCVNLKGPC (93 aa)). Positions 240–493 (IKLLRGLGAG…TLSWQLEEFF (254 aa)) constitute a Protein kinase domain. Residues 246–254 (LGAGQFGEV) and Lys-268 contribute to the ATP site. The active-site Proton acceptor is Asp-359.

The protein belongs to the protein kinase superfamily. Tyr protein kinase family.

Its subcellular location is the cytoplasm. The catalysed reaction is L-tyrosyl-[protein] + ATP = O-phospho-L-tyrosyl-[protein] + ADP + H(+). In Spongilla lacustris (Freshwater sponge), this protein is Tyrosine-protein kinase isoform SRK4 (SRK1).